A 788-amino-acid chain; its full sequence is Endonuclease MutS2 (788 aa).

332–339 (GPNTGGKT) is a binding site for ATP. Residues 713–788 (IDLRGLDSEE…GTGVTVVELK (76 aa)) form the Smr domain.

The protein belongs to the DNA mismatch repair MutS family. MutS2 subfamily. As to quaternary structure, homodimer. Binds to stalled ribosomes, contacting rRNA.

Endonuclease that is involved in the suppression of homologous recombination and thus may have a key role in the control of bacterial genetic diversity. Functionally, acts as a ribosome collision sensor, splitting the ribosome into its 2 subunits. Detects stalled/collided 70S ribosomes which it binds and splits by an ATP-hydrolysis driven conformational change. Acts upstream of the ribosome quality control system (RQC), a ribosome-associated complex that mediates the extraction of incompletely synthesized nascent chains from stalled ribosomes and their subsequent degradation. Probably generates substrates for RQC. This chain is Endonuclease MutS2, found in Clostridium acetobutylicum (strain ATCC 824 / DSM 792 / JCM 1419 / IAM 19013 / LMG 5710 / NBRC 13948 / NRRL B-527 / VKM B-1787 / 2291 / W).